Reading from the N-terminus, the 484-residue chain is Glutamate--tRNA ligase (484 aa).

Positions 11-21 (PSPTGLLHIGN) match the 'HIGH' region motif. A 'KMSKS' region motif is present at residues 255-259 (KLSKR). Lys-258 contributes to the ATP binding site.

The protein belongs to the class-I aminoacyl-tRNA synthetase family. Glutamate--tRNA ligase type 1 subfamily. Monomer.

Its subcellular location is the cytoplasm. The enzyme catalyses tRNA(Glu) + L-glutamate + ATP = L-glutamyl-tRNA(Glu) + AMP + diphosphate. In terms of biological role, catalyzes the attachment of glutamate to tRNA(Glu) in a two-step reaction: glutamate is first activated by ATP to form Glu-AMP and then transferred to the acceptor end of tRNA(Glu). This Streptococcus agalactiae serotype III (strain NEM316) protein is Glutamate--tRNA ligase.